The chain runs to 256 residues: Trans-aconitate 2-methyltransferase (256 aa).

It belongs to the methyltransferase superfamily. Tam family.

It is found in the cytoplasm. The catalysed reaction is trans-aconitate + S-adenosyl-L-methionine = (E)-3-(methoxycarbonyl)pent-2-enedioate + S-adenosyl-L-homocysteine. Catalyzes the S-adenosylmethionine monomethyl esterification of trans-aconitate. The protein is Trans-aconitate 2-methyltransferase of Afipia carboxidovorans (strain ATCC 49405 / DSM 1227 / KCTC 32145 / OM5) (Oligotropha carboxidovorans).